We begin with the raw amino-acid sequence, 258 residues long: Spindlin-2B (258 aa).

Low complexity predominate over residues 1 to 23 (MKTPNAQEAEGQQTRAAAGRATG). The tract at residues 1–49 (MKTPNAQEAEGQQTRAAAGRATGSANMTKKKVSQKKQRGRPSSQPRRNI) is disordered. Basic residues predominate over residues 28-39 (TKKKVSQKKQRG). Tudor-like domain regions lie at residues 50 to 99 (VGCR…LELH), 129 to 178 (IGKA…YQLL), and 210 to 255 (IGKH…YDLV). 2 histone H3K4me3 and H3R8me2a binding regions span residues Glu138 and 246-248 (DFH).

The protein belongs to the SPIN/STSY family. Interacts with C11orf84/SPINDOC. In terms of tissue distribution, detected in all the examined tissues with highest expression in liver, followed by heart, stomach, kidney, skeletal muscle, placenta, and pancreas.

The protein localises to the nucleus. Involved in the regulation of cell cycle progression, this activity is related to the inhibition of apoptosis following the removal of essential growth factors. Exhibits H3K4me3-binding activity. The polypeptide is Spindlin-2B (SPIN2B) (Homo sapiens (Human)).